Consider the following 218-residue polypeptide: tRNA (guanine-N(7)-)-methyltransferase (218 aa).

4 residues coordinate S-adenosyl-L-methionine: Glu-43, Asp-68, Glu-101, and Asn-124. 2 residues coordinate substrate: Lys-128 and Asp-160.

The protein belongs to the class I-like SAM-binding methyltransferase superfamily. TrmB family.

The enzyme catalyses guanosine(46) in tRNA + S-adenosyl-L-methionine = N(7)-methylguanosine(46) in tRNA + S-adenosyl-L-homocysteine. It functions in the pathway tRNA modification; N(7)-methylguanine-tRNA biosynthesis. Catalyzes the formation of N(7)-methylguanine at position 46 (m7G46) in tRNA. This is tRNA (guanine-N(7)-)-methyltransferase from Acetivibrio thermocellus (strain ATCC 27405 / DSM 1237 / JCM 9322 / NBRC 103400 / NCIMB 10682 / NRRL B-4536 / VPI 7372) (Clostridium thermocellum).